A 697-amino-acid chain; its full sequence is Phosphatase and actin regulator 4-B (697 aa).

The stretch at 42 to 67 (EVLERKISMRKPREELVKRGLIVDVP) is one RPEL 1 repeat. 2 disordered regions span residues 63-381 (IVDV…LTLA) and 450-569 (LKVP…SKDE). The span at 189–202 (HVPEKTSEKYRPKS) shows a compositional bias: basic and acidic residues. Composition is skewed to pro residues over residues 317-326 (PSPPLPPKRA) and 370-380 (APNPPVPPLTL). Acidic residues-rich tracts occupy residues 454 to 469 (DDDDDEDELSLEDESL), 501 to 514 (QEEDEEEGVSDTDS), and 522 to 532 (EEDEDEEEEET). 2 RPEL repeats span residues 579–604 (TQLNRRLSQRPTAEELEQRNILQKNE) and 616–641 (RRLTRKLSQRPTVAELLERKILRFNE).

It belongs to the phosphatase and actin regulator family. As to quaternary structure, binds ppp1ca and actin.

It localises to the cytoplasm. Its subcellular location is the cell projection. The protein resides in the lamellipodium. Functionally, regulator of protein phosphatase 1 (PP1) required for neural tube and optic fissure closure, and enteric neural crest cell (ENCCs) migration during development. Acts as an activator of PP1. During neural tube closure, localizes to the ventral neural tube and activates PP1, leading to down-regulate cell proliferation within cranial neural tissue and the neural retina. Also acts as a regulator of migration of enteric neural crest cells (ENCCs) by activating PP1, leading to repression of the integrin signaling through the rho/rock pathway. In Xenopus laevis (African clawed frog), this protein is Phosphatase and actin regulator 4-B (phactr4-b).